The primary structure comprises 764 residues: Protein Lines homolog 1 (764 aa).

2 disordered regions span residues 615–668 (SQSQ…TSLC) and 682–702 (WEEQ…SSPF). The span at 645–654 (DSSEASEEET) shows a compositional bias: acidic residues. The residue at position 650 (Ser650) is a Phosphoserine. Over residues 658–668 (HLANSKQTSLC) the composition is skewed to polar residues. Low complexity predominate over residues 691–702 (EPLLSAESSSPF).

The protein belongs to the protein lines family.

The sequence is that of Protein Lines homolog 1 from Mus musculus (Mouse).